The chain runs to 428 residues: Maltoporin (428 aa).

The signal sequence occupies residues 1 to 21 (MKKTLLAVAIGGAMFATSAAA).

Belongs to the porin LamB (TC 1.B.3) family. In terms of assembly, homotrimer formed of three 18-stranded antiparallel beta-barrels, containing three independent channels.

The protein localises to the cell outer membrane. The enzyme catalyses beta-maltose(in) = beta-maltose(out). In terms of biological role, involved in the transport of maltose and maltodextrins. This Mannheimia succiniciproducens (strain KCTC 0769BP / MBEL55E) protein is Maltoporin.